The primary structure comprises 632 residues: MLTLIKLKIQNFGRFLSNMIMPNISIFIAWGMMNALFMPLGWQPNKTLEQLISPMIFYLLPILIGYTGGSLISGSRGGLIGSITTIGVITSTNIPMLLGAMISGPLGGWTIKYFDKKIENKVKNGFEMLVNNFSLAILGILLAIISFFTIGPFIEWVSYFLGTLIQIILSYNLLPLTSIIIEPAKIFFLNNVINHGIFSPLGIQDALDKNHSIFFLIESNPGPGLGLLIAWFFFGKGELSKSSGGAALIEFFGGIHEIYFPYVLIKPKLIIPLILGGMSGIFILVLLHGGLISTASPGSILSILAMTPKGLYFSNIISVACSFLVSFISSSILLKYDFNTIQKDSNYTVKQGKNSFNSKTSREDFNNFNFSKIKTIIVACDAGMGSSAMGASILRKKIKNANLNHISVLNMAINALPQDADLIITHQNLTNRAKDNAPFSQHISLKNFLNNHFYDNLVKKLVENMVFLYDNHTDSVNKYTQQKKDALFQLNEENIILNQYASNKEEAINIVGKHLVKQGYVKFDYIDSMLEREKMASTWLGESIALPHGTIEAKDSVLKTGIIFCQFPKGVRFGEDVDDIAYLVIGIAAKNNEHIMVVSNITNALDKKDTIQRLSHTTSIKEALSLLTMEKI.

Residues 12–341 (FGRFLSNMIM…ILLKYDFNTI (330 aa)) form the PTS EIIC type-2 domain. Helical transmembrane passes span 24–45 (ISIF…WQPN), 50–70 (QLIS…TGGS), 134–155 (SLAI…PFIE), 165–185 (IQII…EPAK), 273–292 (LILG…GGLI), and 313–334 (FSNI…SILL). In terms of domain architecture, PTS EIIB type-2 spans 374 to 469 (KTIIVACDAG…KLVENMVFLY (96 aa)). Cys380 serves as the catalytic Phosphocysteine intermediate; for EIIB activity. Cys380 carries the phosphocysteine; by EIIA modification. In terms of domain architecture, PTS EIIA type-2 spans 488–630 (FQLNEENIIL…KEALSLLTME (143 aa)). His548 (tele-phosphohistidine intermediate; for EIIA activity) is an active-site residue. His548 carries the phosphohistidine; by HPr modification.

In terms of assembly, homodimer. In terms of processing, an intramolecular phosphotransfer takes places between His-548 and Cys-380.

It localises to the cell inner membrane. The catalysed reaction is D-mannitol(out) + N(pros)-phospho-L-histidyl-[protein] = D-mannitol 1-phosphate(in) + L-histidyl-[protein]. The phosphoenolpyruvate-dependent sugar phosphotransferase system (sugar PTS), a major carbohydrate active transport system, catalyzes the phosphorylation of incoming sugar substrates concomitantly with their translocation across the cell membrane. This system is involved in D-mannitol transport. The sequence is that of PTS system mannitol-specific EIICBA component (mtlA) from Buchnera aphidicola subsp. Acyrthosiphon pisum (strain APS) (Acyrthosiphon pisum symbiotic bacterium).